A 396-amino-acid polypeptide reads, in one-letter code: Squamosa promoter-binding-like protein 10 (396 aa).

Positions Gln-74–Asp-104 are disordered. The segment covering Leu-90 to Asp-104 has biased composition (polar residues). The SBP-type zinc-finger motif lies at Val-173–Pro-250. Zn(2+) contacts are provided by Cys-176, Cys-181, Cys-198, His-201, Cys-217, Cys-220, His-224, and Cys-236. The Bipartite nuclear localization signal motif lies at Lys-233–Lys-249.

The cofactor is Zn(2+).

Its subcellular location is the nucleus. Trans-acting factor that binds specifically to the consensus nucleotide sequence 5'-TNCGTACAA-3'. This is Squamosa promoter-binding-like protein 10 (SPL10) from Arabidopsis thaliana (Mouse-ear cress).